Here is a 425-residue protein sequence, read N- to C-terminus: Trigger factor (425 aa).

The PPIase FKBP-type domain occupies Gly163 to Pro248.

This sequence belongs to the FKBP-type PPIase family. Tig subfamily.

It is found in the cytoplasm. It carries out the reaction [protein]-peptidylproline (omega=180) = [protein]-peptidylproline (omega=0). Involved in protein export. Acts as a chaperone by maintaining the newly synthesized protein in an open conformation. Functions as a peptidyl-prolyl cis-trans isomerase. The chain is Trigger factor from Bacillus cereus (strain Q1).